Consider the following 395-residue polypeptide: S-adenosylmethionine synthase (395 aa).

Position 15 (His15) interacts with ATP. Asp17 lines the Mg(2+) pocket. Residue Glu43 participates in K(+) binding. The L-methionine site is built by Glu56 and Gln99. Residues 99-109 (QSPEIAQGVDR) form a flexible loop region. ATP contacts are provided by residues 164–166 (DAK), 230–231 (RF), Asp239, 245–246 (RK), Ala262, and Lys266. Asp239 contributes to the L-methionine binding site. Lys270 provides a ligand contact to L-methionine.

This sequence belongs to the AdoMet synthase family. Homotetramer; dimer of dimers. The cofactor is Mg(2+). K(+) serves as cofactor.

The protein resides in the cytoplasm. The catalysed reaction is L-methionine + ATP + H2O = S-adenosyl-L-methionine + phosphate + diphosphate. It functions in the pathway amino-acid biosynthesis; S-adenosyl-L-methionine biosynthesis; S-adenosyl-L-methionine from L-methionine: step 1/1. In terms of biological role, catalyzes the formation of S-adenosylmethionine (AdoMet) from methionine and ATP. The overall synthetic reaction is composed of two sequential steps, AdoMet formation and the subsequent tripolyphosphate hydrolysis which occurs prior to release of AdoMet from the enzyme. The chain is S-adenosylmethionine synthase from Colwellia psychrerythraea (strain 34H / ATCC BAA-681) (Vibrio psychroerythus).